Reading from the N-terminus, the 509-residue chain is ATP synthase subunit alpha (509 aa).

169–176 (GDRQTGKT) is a binding site for ATP.

It belongs to the ATPase alpha/beta chains family. In terms of assembly, F-type ATPases have 2 components, CF(1) - the catalytic core - and CF(0) - the membrane proton channel. CF(1) has five subunits: alpha(3), beta(3), gamma(1), delta(1), epsilon(1). CF(0) has three main subunits: a(1), b(2) and c(9-12). The alpha and beta chains form an alternating ring which encloses part of the gamma chain. CF(1) is attached to CF(0) by a central stalk formed by the gamma and epsilon chains, while a peripheral stalk is formed by the delta and b chains.

It is found in the cell inner membrane. It carries out the reaction ATP + H2O + 4 H(+)(in) = ADP + phosphate + 5 H(+)(out). Functionally, produces ATP from ADP in the presence of a proton gradient across the membrane. The alpha chain is a regulatory subunit. The sequence is that of ATP synthase subunit alpha from Chelativorans sp. (strain BNC1).